Consider the following 1138-residue polypeptide: Transmembrane channel-like protein 3 (1138 aa).

Residues methionine 1 to alanine 15 show a composition bias toward low complexity. Disordered stretches follow at residues methionine 1 to lysine 20 and asparagine 29 to aspartate 54. The Cytoplasmic segment spans residues methionine 1 to tryptophan 155. The chain crosses the membrane as a helical span at residues leucine 156 to leucine 176. Residues leucine 177–aspartate 202 are Extracellular-facing. A helical transmembrane segment spans residues threonine 203 to serine 223. Over aspartate 224–arginine 233 the chain is Cytoplasmic. Residues leucine 234–leucine 254 form a helical membrane-spanning segment. At lysine 255–arginine 327 the chain is on the extracellular side. A glycan (N-linked (GlcNAc...) asparagine) is linked at asparagine 272. Residues isoleucine 328–valine 348 form a helical membrane-spanning segment. Residues valine 349–glutamate 369 lie on the Cytoplasmic side of the membrane. Residues valine 370–alanine 390 traverse the membrane as a helical segment. The Extracellular portion of the chain corresponds to leucine 391–arginine 401. The helical transmembrane segment at phenylalanine 402–leucine 422 threads the bilayer. The Cytoplasmic segment spans residues leucine 423 to methionine 508. A helical membrane pass occupies residues leucine 509 to phenylalanine 529. The Extracellular portion of the chain corresponds to arginine 530–glycine 569. Residues methionine 570–isoleucine 590 form a helical membrane-spanning segment. The Cytoplasmic portion of the chain corresponds to glycine 591 to asparagine 618. The chain crosses the membrane as a helical span at residues phenylalanine 619 to isoleucine 639. At alanine 640–valine 676 the chain is on the extracellular side. A helical transmembrane segment spans residues isoleucine 677–isoleucine 697. Residues tyrosine 698–valine 1138 lie on the Cytoplasmic side of the membrane. Residues asparagine 753 to aspartate 763 show a composition bias toward polar residues. Disordered stretches follow at residues asparagine 753–serine 859, serine 973–proline 1005, and proline 1065–aspartate 1095. Residues glycine 764–glycine 773 are compositionally biased toward basic and acidic residues. Composition is skewed to polar residues over residues serine 777 to asparagine 795 and threonine 804 to valine 813. Residues threonine 828 to alanine 845 are compositionally biased toward low complexity. Over residues histidine 989–arginine 998 the composition is skewed to basic residues. The segment covering serine 1074–aspartate 1095 has biased composition (low complexity).

This sequence belongs to the TMC family. As to expression, expressed in a range of tissues including cerebrum, cerebellum, retina, cochlea, lung, liver and heart. Also expressed in the apical, medial and basal portions of the basillar papilla.

Its subcellular location is the membrane. Functionally, probable component of an ion channel. This is Transmembrane channel-like protein 3 from Gallus gallus (Chicken).